The chain runs to 70 residues: Fumarase D (70 aa).

Belongs to the FumD family.

It carries out the reaction (S)-malate = fumarate + H2O. Functionally, in vitro catalyzes the addition of water to fumarate, forming malate. Cannot catalyze the reverse reaction. Cannot use the cis-isomer maleate as substrate. The chain is Fumarase D from Salmonella typhi.